We begin with the raw amino-acid sequence, 469 residues long: Phosphoenolpyruvate carboxylase (469 aa).

It belongs to the PEPCase type 2 family. As to quaternary structure, homotetramer. Requires Mg(2+) as cofactor.

It catalyses the reaction oxaloacetate + phosphate = phosphoenolpyruvate + hydrogencarbonate. Functionally, catalyzes the irreversible beta-carboxylation of phosphoenolpyruvate (PEP) to form oxaloacetate (OAA), a four-carbon dicarboxylic acid source for the tricarboxylic acid cycle. In Pyrococcus horikoshii (strain ATCC 700860 / DSM 12428 / JCM 9974 / NBRC 100139 / OT-3), this protein is Phosphoenolpyruvate carboxylase.